The sequence spans 123 residues: UPF0102 protein Dole_2298 (123 aa).

It belongs to the UPF0102 family.

The protein is UPF0102 protein Dole_2298 of Desulfosudis oleivorans (strain DSM 6200 / JCM 39069 / Hxd3) (Desulfococcus oleovorans).